The chain runs to 272 residues: EID1-like F-box protein 3 (272 aa).

Positions 29 to 81 (SGKSGIENERVLVLVFESISWDIHTLCTIASLSRRFCAIARRILWRRLCVNRA) constitute an F-box domain.

The sequence is that of EID1-like F-box protein 3 (EDL3) from Arabidopsis thaliana (Mouse-ear cress).